We begin with the raw amino-acid sequence, 1565 residues long: Synemin (1565 aa).

The tract at residues 1–10 (MLSWRLQTGP) is head. The tract at residues 11–49 (EKAELQELNARLYDYVCRVRELERENLLLEEELRGRRGR) is coil 1A. The tract at residues 11 to 320 (EKAELQELNA…YRALLEGESN (310 aa)) is interaction with DMD and UTRN. The 312-residue stretch at 11–322 (EKAELQELNA…ALLEGESNPE (312 aa)) folds into the IF rod domain. The interval 50–58 (EGLWAEGQA) is linker 1. Residues 59–163 (RCAEEARSLR…ELRARAASLT (105 aa)) are coil 1B. The tract at residues 164–186 (MHFRARATGPAAPPPRLREVHDS) is linker 12. Residues 187-300 (YALLVAESWR…LRDYQDLLQV (114 aa)) are coil 2. The segment at 301–1565 (KTGLSLEVAT…EEEENDGHWF (1265 aa)) is tail. Positions 401 to 421 (SGYSSSATTQQENSYGKAVSS) are disordered. The segment covering 402-421 (GYSSSATTQQENSYGKAVSS) has biased composition (polar residues). Residue Ser429 is modified to Phosphoserine. The interval 472 to 609 (YRDRRDKVAA…VKDAGGGTGR (138 aa)) is disordered. Positions 498 to 577 (KKTEVKATRE…KEKSVREREV (80 aa)) are enriched in basic and acidic residues. Thr598 and Thr651 each carry phosphothreonine. A phosphoserine mark is found at Ser653 and Ser777. Positions 1019-1040 (LSKDEASEMEKAVESVVRESLS) are enriched in basic and acidic residues. Residues 1019 to 1060 (LSKDEASEMEKAVESVVRESLSRQRSPAPGSPDEEGGAEAPA) are disordered. Phosphoserine is present on residues Ser1044, Ser1049, Ser1077, Ser1087, Ser1181, and Ser1184. Residues 1080–1105 (SEVAGGASHSSGQRTPQGPVSATVEV) form a disordered region. Over residues 1087–1105 (SHSSGQRTPQGPVSATVEV) the composition is skewed to polar residues. An interaction with TLN1 and VCL region spans residues 1152-1463 (VSAGGDLSQA…GPKETSFTFQ (312 aa)). 2 disordered regions span residues 1198–1221 (EAWG…GRHS) and 1332–1415 (QLGE…ETSE). The segment at 1244-1563 (GKVGDYFATE…DNEEEENDGH (320 aa)) is interaction with DMD and UTRN. Polar residues predominate over residues 1354 to 1379 (ATHSHTSGRQTVMTEKSTFQSVVSES). Phosphoserine is present on Ser1435. The residue at position 1487 (Arg1487) is an Omega-N-methylarginine. Positions 1505–1525 (FKASAGEGDQAHREQGKEQAM) are disordered. The segment covering 1513–1525 (DQAHREQGKEQAM) has biased composition (basic and acidic residues).

It belongs to the intermediate filament family. In terms of assembly, interacts with GFAP and VIM. Isoform 1 interacts with TLN1 and VCL. Isoform 2 interacts with DES and DTNA. Isoform 1 and isoform 2 interact with DMD and UTRN. In terms of tissue distribution, isoform 2 is strongly detected in adult heart, fetal skeletal muscles and fetal heart. Isoform 1 is weakly detected in fetal heart and also in fetal skeletal muscle. Isoform 1 and isoform 2 are detected in adult bladder (at protein level). The mRNA is predominantly expressed in heart and muscle with some expression in brain which may be due to tissue-specific isoforms.

Its subcellular location is the cytoplasm. It localises to the cytoskeleton. The protein resides in the cell junction. It is found in the adherens junction. Functionally, type-VI intermediate filament (IF) which plays an important cytoskeletal role within the muscle cell cytoskeleton. It forms heteromeric IFs with desmin and/or vimentin, and via its interaction with cytoskeletal proteins alpha-dystrobrevin, dystrophin, talin-1, utrophin and vinculin, is able to link these heteromeric IFs to adherens-type junctions, such as to the costameres, neuromuscular junctions, and myotendinous junctions within striated muscle cells. The protein is Synemin of Homo sapiens (Human).